Reading from the N-terminus, the 417-residue chain is MIDIKLLRENPDFVKERLKTRDESYLKLIDRLLEIDEERRKIIKEIESLRAERNEKSKLFPILKKEGKDTTEIQQRVKQIGEIIKNLEDKLQEIENEFNNILYYIPNLPAPDVPIGKDENDNVEIRRWGKPRKFDFEPLSHYEIGERLGILDFERGAKLSGSRFTVMFKEAARLERALINFMLDVHTKQHGYTEVWTPALVKPEILFGTGQLPKFKDDLYKIEDEDLYLIPTAEVTLTNLHADEILNEEDLPKYYTAYTPCFRKEAGSHGKDVKGILRQHQFDKVELVKIVKPEDSYNELEKLVNEAEKILQLLEIPYRVVLLCTGDMGFSAAKTYDIEVWIPSQNRYREISSCSNTEDFQARRAKIRYKDKDGKNHYVHTLNGSGLAVGRTLIAIMENYQKPDGTFEIPKVLKDYL.

232-234 contacts L-serine; the sequence is TAE. 263 to 265 is an ATP binding site; sequence RKE. L-serine is bound at residue Glu-286. 350–353 serves as a coordination point for ATP; the sequence is EISS. L-serine is bound at residue Ser-385.

It belongs to the class-II aminoacyl-tRNA synthetase family. Type-1 seryl-tRNA synthetase subfamily. Homodimer. The tRNA molecule binds across the dimer.

It is found in the cytoplasm. It catalyses the reaction tRNA(Ser) + L-serine + ATP = L-seryl-tRNA(Ser) + AMP + diphosphate + H(+). The enzyme catalyses tRNA(Sec) + L-serine + ATP = L-seryl-tRNA(Sec) + AMP + diphosphate + H(+). It participates in aminoacyl-tRNA biosynthesis; selenocysteinyl-tRNA(Sec) biosynthesis; L-seryl-tRNA(Sec) from L-serine and tRNA(Sec): step 1/1. In terms of biological role, catalyzes the attachment of serine to tRNA(Ser). Is also able to aminoacylate tRNA(Sec) with serine, to form the misacylated tRNA L-seryl-tRNA(Sec), which will be further converted into selenocysteinyl-tRNA(Sec). This Sulfurihydrogenibium sp. (strain YO3AOP1) protein is Serine--tRNA ligase.